The sequence spans 90 residues: CRISPR-associated endonuclease Cas2 2 (90 aa).

D11 provides a ligand contact to Mg(2+).

Belongs to the CRISPR-associated endoribonuclease Cas2 protein family. As to quaternary structure, homodimer, forms a heterotetramer with a Cas1 homodimer. Mn(2+) is required as a cofactor. It depends on Mg(2+) as a cofactor.

Inhibited by EDTA and at pH 6.0. Its function is as follows. CRISPR (clustered regularly interspaced short palindromic repeat), is an adaptive immune system that provides protection against mobile genetic elements (viruses, transposable elements and conjugative plasmids). CRISPR clusters contain sequences complementary to antecedent mobile elements and target invading nucleic acids. CRISPR clusters are transcribed and processed into CRISPR RNA (crRNA). Involved in the integration of spacer DNA into the CRISPR cassette. Functions as a dsDNA endonuclease and as a weak ssRNase. The protein is CRISPR-associated endonuclease Cas2 2 (cas2b) of Thermus thermophilus (strain ATCC BAA-163 / DSM 7039 / HB27).